The chain runs to 183 residues: Alkyl hydroperoxide reductase AhpD (183 aa).

Cys132 functions as the Proton donor in the catalytic mechanism. Cysteines 132 and 135 form a disulfide. Cys135 serves as the catalytic Cysteine sulfenic acid (-SOH) intermediate.

This sequence belongs to the AhpD family.

It catalyses the reaction N(6)-[(R)-dihydrolipoyl]-L-lysyl-[lipoyl-carrier protein] + a hydroperoxide = N(6)-[(R)-lipoyl]-L-lysyl-[lipoyl-carrier protein] + an alcohol + H2O. Functionally, antioxidant protein with alkyl hydroperoxidase activity. Required for the reduction of the AhpC active site cysteine residues and for the regeneration of the AhpC enzyme activity. The polypeptide is Alkyl hydroperoxide reductase AhpD (Caulobacter vibrioides (strain ATCC 19089 / CIP 103742 / CB 15) (Caulobacter crescentus)).